The sequence spans 454 residues: Bifunctional protein GlmU (454 aa).

The pyrophosphorylase stretch occupies residues 1 to 231 (MSRPTVSLIV…EAETLGVNTR (231 aa)). Residues 11–14 (LAAG), K25, Q78, 83–84 (GT), 106–108 (YGD), G143, E157, N172, and N229 contribute to the UDP-N-acetyl-alpha-D-glucosamine site. Mg(2+) is bound at residue D108. N229 contributes to the Mg(2+) binding site. Residues 232–252 (AQLAAAEAEFQRRARAAALED) are linker. An N-acetyltransferase region spans residues 253 to 454 (GVTLTAPDTV…ARDASKKGTN (202 aa)). Residues R318 and K336 each coordinate UDP-N-acetyl-alpha-D-glucosamine. The active-site Proton acceptor is H348. UDP-N-acetyl-alpha-D-glucosamine is bound by residues Y351 and N362. Acetyl-CoA is bound by residues A365, 371–372 (NY), S390, S408, and R425.

In the N-terminal section; belongs to the N-acetylglucosamine-1-phosphate uridyltransferase family. The protein in the C-terminal section; belongs to the transferase hexapeptide repeat family. In terms of assembly, homotrimer. Mg(2+) is required as a cofactor.

It localises to the cytoplasm. It carries out the reaction alpha-D-glucosamine 1-phosphate + acetyl-CoA = N-acetyl-alpha-D-glucosamine 1-phosphate + CoA + H(+). It catalyses the reaction N-acetyl-alpha-D-glucosamine 1-phosphate + UTP + H(+) = UDP-N-acetyl-alpha-D-glucosamine + diphosphate. Its pathway is nucleotide-sugar biosynthesis; UDP-N-acetyl-alpha-D-glucosamine biosynthesis; N-acetyl-alpha-D-glucosamine 1-phosphate from alpha-D-glucosamine 6-phosphate (route II): step 2/2. It functions in the pathway nucleotide-sugar biosynthesis; UDP-N-acetyl-alpha-D-glucosamine biosynthesis; UDP-N-acetyl-alpha-D-glucosamine from N-acetyl-alpha-D-glucosamine 1-phosphate: step 1/1. It participates in bacterial outer membrane biogenesis; LPS lipid A biosynthesis. In terms of biological role, catalyzes the last two sequential reactions in the de novo biosynthetic pathway for UDP-N-acetylglucosamine (UDP-GlcNAc). The C-terminal domain catalyzes the transfer of acetyl group from acetyl coenzyme A to glucosamine-1-phosphate (GlcN-1-P) to produce N-acetylglucosamine-1-phosphate (GlcNAc-1-P), which is converted into UDP-GlcNAc by the transfer of uridine 5-monophosphate (from uridine 5-triphosphate), a reaction catalyzed by the N-terminal domain. This is Bifunctional protein GlmU from Cereibacter sphaeroides (strain ATCC 17025 / ATH 2.4.3) (Rhodobacter sphaeroides).